Here is a 431-residue protein sequence, read N- to C-terminus: MKHLTNMVEQHKRGKANGIYAVCSAHPLVLESAIRYAHANHTPLLIEATSNQVDQFGGYTGMTPADFRDFVCQLADSLGFPQSELILGGDHLGPNRWQNLPATQAMANADDLIKSYVAAGFKKIHLDCSMSCADDPVPLTDEIVAERAARLAKVAEETCQQHFGKSDLVYVIGTEVPVPGGAHETLTELEVTTPEAARATLEAHRYAFEKQGLDAIWPRINALVVQPGVEFDHTQIIDYQPQKATELSKMVETYDMLVFEAHSTDYQTPQSLRQLVKDHFAILKVGPALTFALREALFSLAAIEEELLPAKACSGLRHVLESVMLDRPEYWQNHYHGDGNARRLARGYSYSDRVRYYWPDSQIDDAFERLVRNLADEPIPLPLISQYLPLQYVKVREGDLNATPRELIISHIQDILQQYHAACYGTTFYNE.

It belongs to the GatZ/KbaZ family. KbaZ subfamily. In terms of assembly, forms a complex with KbaY.

Its pathway is carbohydrate metabolism; D-tagatose 6-phosphate degradation; D-glyceraldehyde 3-phosphate and glycerone phosphate from D-tagatose 6-phosphate: step 2/2. Its function is as follows. Component of the tagatose-1,6-bisphosphate aldolase KbaYZ that is required for full activity and stability of the Y subunit. Could have a chaperone-like function for the proper and stable folding of KbaY. When expressed alone, KbaZ does not show any aldolase activity. This Salmonella arizonae (strain ATCC BAA-731 / CDC346-86 / RSK2980) protein is D-tagatose-1,6-bisphosphate aldolase subunit KbaZ.